The primary structure comprises 363 residues: S-adenosylmethionine:tRNA ribosyltransferase-isomerase (363 aa).

The protein belongs to the QueA family. As to quaternary structure, monomer.

The protein resides in the cytoplasm. The catalysed reaction is 7-aminomethyl-7-carbaguanosine(34) in tRNA + S-adenosyl-L-methionine = epoxyqueuosine(34) in tRNA + adenine + L-methionine + 2 H(+). Its pathway is tRNA modification; tRNA-queuosine biosynthesis. Its function is as follows. Transfers and isomerizes the ribose moiety from AdoMet to the 7-aminomethyl group of 7-deazaguanine (preQ1-tRNA) to give epoxyqueuosine (oQ-tRNA). The polypeptide is S-adenosylmethionine:tRNA ribosyltransferase-isomerase (Pasteurella multocida (strain Pm70)).